Reading from the N-terminus, the 213-residue chain is StAR-related lipid transfer protein 5 (213 aa).

The START domain maps to 1–213 (MDLATAAQVS…LEKAVKKFFG (213 aa)).

May be involved in the intracellular transport of sterols or other lipids. May bind cholesterol or other sterols. This is StAR-related lipid transfer protein 5 (STARD5) from Bos taurus (Bovine).